A 682-amino-acid chain; its full sequence is Nephrocystin-1-like protein (682 aa).

Residues 10–100 adopt a coiled-coil conformation; it reads LQDAINRFPQ…ALSPEKEQLS (91 aa). Residues 96 to 188 are disordered; it reads KEQLSFSVSV…PLESKTLNER (93 aa). Residues 128 to 148 show a composition bias toward acidic residues; it reads NDDESEDSDNDSEIIETDVQL. Residues 215-275 enclose the SH3 domain; sequence VRGNVFVAID…PKTYLQHVKE (61 aa).

It belongs to the nephrocystin-1 family. As to expression, expressed in ciliated sensory neurons of the head (amphid neurons) and the tail in hermaphrodites (phasmid neurons) and males (sensory ray neurons).

In terms of biological role, plays a role in the extension of dendrites from phasmid ciliated sensory neurons. May be necessary for initial assembly of the cilium. The polypeptide is Nephrocystin-1-like protein (Caenorhabditis elegans).